We begin with the raw amino-acid sequence, 287 residues long: Cyclopropane mycolic acid synthase 1 (287 aa).

Residues 33-34, 68-76, 94-99, and 123-124 each bind S-adenosyl-L-methionine; these read YS, LLDVGCGWG, TLSKNQ, and WE. Cys269 is a catalytic residue.

It belongs to the CFA/CMAS family. As to quaternary structure, homodimer.

The protein localises to the cytoplasm. The catalysed reaction is a 1-acyl-2-(9Z)-enoyl-sn-glycero-3-phospholipid + S-adenosyl-L-methionine = a 1-acyl-2-(9-cyclopronane)-acyl-sn-glycero-3-phospholipid + S-adenosyl-L-homocysteine + H(+). It functions in the pathway lipid metabolism; mycolic acid biosynthesis. In terms of biological role, catalyzes the conversion of a double bond to a cyclopropane ring at the distal position of an alpha mycolic acid via the transfer of a methylene group from S-adenosyl-L-methionine. Cyclopropanated mycolic acids are key factors participating in cell envelope permeability, host immunomodulation and persistence. The sequence is that of Cyclopropane mycolic acid synthase 1 (cmaA1) from Mycobacterium tuberculosis (strain ATCC 25177 / H37Ra).